A 350-amino-acid polypeptide reads, in one-letter code: Guanine nucleotide-binding protein G(t) subunit alpha-1 (350 aa).

Positions 1–21 (MGAGASAEEKHSRELEKKLKE) are disordered. Residue glycine 2 is the site of N-myristoyl glycine attachment. The segment covering 7-21 (AEEKHSRELEKKLKE) has biased composition (basic and acidic residues). The region spanning 28 to 350 (RTVKLLLLGA…KENLKDCGLF (323 aa)) is the G-alpha domain. The tract at residues 31-44 (KLLLLGAGESGKST) is G1 motif. 36–43 (GAGESGKS) is a binding site for GTP. Serine 43 lines the Mg(2+) pocket. A Phosphotyrosine modification is found at tyrosine 142. Residues aspartate 146, 171-177 (LRSRVKT), glycine 199, 265-268 (NKKD), and alanine 322 contribute to the GTP site. The segment at 169–177 (DVLRSRVKT) is G2 motif. Threonine 177 is a Mg(2+) binding site. The G3 motif stretch occupies residues 192–201 (FRMFDVGGQR). The G4 motif stretch occupies residues 261 to 268 (VLFLNKKD). A G5 motif region spans residues 320 to 325 (TCATDT). The interaction with RHO stretch occupies residues 340 to 350 (IKENLKDCGLF).

Heterotrimeric G proteins are composed of 3 subunits alpha, beta and gamma. The alpha chain contains the guanine nucleotide binding site. Interacts with RHO. Interacts with RGS9 and PDE6G. Interacts (when myristoylated) with UNC119; interaction is required for localization in sensory neurons. Rod.

Its subcellular location is the cell projection. It localises to the cilium. It is found in the photoreceptor outer segment. The protein localises to the membrane. The protein resides in the photoreceptor inner segment. Functionally, functions as a signal transducer for the rod photoreceptor RHO. Required for normal RHO-mediated light perception by the retina. Guanine nucleotide-binding proteins (G proteins) function as transducers downstream of G protein-coupled receptors (GPCRs), such as the photoreceptor RHO. The alpha chain contains the guanine nucleotide binding site and alternates between an active, GTP-bound state and an inactive, GDP-bound state. Activated RHO promotes GDP release and GTP binding. Signaling is mediated via downstream effector proteins, such as cGMP-phosphodiesterase. In Bos taurus (Bovine), this protein is Guanine nucleotide-binding protein G(t) subunit alpha-1 (GNAT1).